Consider the following 454-residue polypeptide: MNTRRLFARSRLQLAFWYALVMGGILTLLGLGVYRAIVQANWMALEREVESIAGTLHDSLEPMLPSNASPTGVLQKMLPDLCLVNQPCQVNPTLIERHTLGISDRSLYYIRLFDYQGNLLAFSPNQPASLSSIFNQETWQTIHPPTGDRYRQFTTILHSAGNTDKSSWGYLQIGRSLAAFDAENKRILWILGLSFPIALGLVAFSSWGLAGLAMRPIYQSYQQQQQFTANAAHELRSPLASLLATVEAVLRIDSSHSPEINTMLHTVERQGRRLSQLITDLLLLSRLEQETTAEDWRLCCLNDLVSDLTEEFLELAIAAHIDLSSDLSSGEVYAWGNESQLYRLVSNLIANAIQYTTAGGRVDITLTSHEQMAIITVQDTGIGIAPDQQEHIFERFYRVNRDRSRKTGGTGLGLAIAQVITVKHRGSLTVESALGKGSLFTIQLPIFSVPIVHS.

Residues 1-13 (MNTRRLFARSRLQ) lie on the Periplasmic side of the membrane. The chain crosses the membrane as a helical span at residues 14-34 (LAFWYALVMGGILTLLGLGVY). Topologically, residues 35 to 186 (RAIVQANWMA…LAAFDAENKR (152 aa)) are cytoplasmic. The helical transmembrane segment at 187-207 (ILWILGLSFPIALGLVAFSSW) threads the bilayer. Topologically, residues 208 to 454 (GLAGLAMRPI…PIFSVPIVHS (247 aa)) are periplasmic. A Histidine kinase domain is found at 230 to 448 (NAAHELRSPL…LFTIQLPIFS (219 aa)). Histidine 233 bears the Phosphohistidine; by autocatalysis mark.

The protein resides in the cell inner membrane. The catalysed reaction is ATP + protein L-histidine = ADP + protein N-phospho-L-histidine.. Member of two-component regulatory system RppA/RppB, involved in the establishment of the appropriate stoichiometry between the 2 photosystems. It senses changes in the plastoquinone (PQ) redox poise. Another group shows this two-component pair, renamed NrsR/NrsS, controls the nickel-dependent expression of the nrsBACD operon; they suggest the photosystem-related activities seen earlier are due to the expression of NrsS (RppB) in the absence of its natural substrate NrsR (RppA). The chain is Sensor histidine kinase RppB from Synechocystis sp. (strain ATCC 27184 / PCC 6803 / Kazusa).